The chain runs to 443 residues: Deoxyguanosinetriphosphate triphosphohydrolase-like protein (443 aa).

In terms of domain architecture, HD spans 66–259 (RLTHSLEAAQ…MELADDIAYG (194 aa)).

It belongs to the dGTPase family. Type 2 subfamily.

In Vibrio vulnificus (strain CMCP6), this protein is Deoxyguanosinetriphosphate triphosphohydrolase-like protein.